Reading from the N-terminus, the 247-residue chain is ATP synthase subunit a (247 aa).

6 helical membrane-spanning segments follow: residues 23-43 (ISFT…TLFL), 90-110 (LFMF…VIGF), 116-136 (VIVT…IGFA), 145-165 (MFFP…IELI), 194-214 (GFVV…FAFL), and 215-235 (SAIT…FTIL).

This sequence belongs to the ATPase A chain family. F-type ATPases have 2 components, CF(1) - the catalytic core - and CF(0) - the membrane proton channel. CF(1) has five subunits: alpha(3), beta(3), gamma(1), delta(1), epsilon(1). CF(0) has three main subunits: a(1), b(2) and c(9-12). The alpha and beta chains form an alternating ring which encloses part of the gamma chain. CF(1) is attached to CF(0) by a central stalk formed by the gamma and epsilon chains, while a peripheral stalk is formed by the delta and b chains.

It localises to the cell inner membrane. Functionally, key component of the proton channel; it plays a direct role in the translocation of protons across the membrane. This Paramagnetospirillum magneticum (strain ATCC 700264 / AMB-1) (Magnetospirillum magneticum) protein is ATP synthase subunit a.